We begin with the raw amino-acid sequence, 159 residues long: Large ribosomal subunit protein uL23m (159 aa).

This sequence belongs to the universal ribosomal protein uL23 family. Component of the mitochondrial ribosome large subunit (39S) which comprises a 16S rRNA and about 50 distinct proteins.

It is found in the mitochondrion. This chain is Large ribosomal subunit protein uL23m (mrpl-23), found in Caenorhabditis elegans.